A 223-amino-acid polypeptide reads, in one-letter code: Serine/threonine/tyrosine-interacting protein (223 aa).

The Tyrosine-protein phosphatase domain occupies 28–176 (EMQEVLPGLF…LQEYEAIYLA (149 aa)). An Interaction with FBXW7 motif is present at residues 76-78 (FQQ). Serine 184 and serine 201 each carry phosphoserine. The interval 199–223 (TGSVKRTHEEDDDFGNMQVATAQNG) is disordered.

This sequence belongs to the protein-tyrosine phosphatase family. Non-receptor class subfamily. Interacts with MAPK1; independently of MAPK1 phosphorylation status. Interacts with CARHSP1/Crhsp-24. Interacts (via FQQ motif) with FBXW7 (via F-box domain); the interaction is direct and prevents FBXW7 interaction with SKP1, a component of the SCF(FBXW7) complex. As to expression, widely expressed with highest levels in muscle, testis and brain. In testis, expression starts 13-14 days after birth and is limited to the seminiferous tubule and to round and elongating spermatids. Expression is low in condensing spermatids and pachytene spermatocytes, and absent in spermatogonia, spermatozoa and somatic Sertoli cells.

The protein resides in the nucleus. It localises to the cytoplasm. Its subcellular location is the cytosol. In terms of biological role, catalytically inactive phosphatase. Acts as a nuclear anchor for MAPK1/MAPK3 (ERK1/ERK2). Modulates cell-fate decisions and cell migration by spatiotemporal regulation of MAPK1/MAPK3 (ERK1/ERK2). By binding to the F-box of FBXW7, prevents the assembly of FBXW7 into the SCF E3 ubiquitin-protein ligase complex, and thereby inhibits degradation of its substrates. Plays a role in spermatogenesis. The sequence is that of Serine/threonine/tyrosine-interacting protein from Mus musculus (Mouse).